The sequence spans 199 residues: GTP cyclohydrolase-2 (199 aa).

Residue 50 to 54 participates in GTP binding; that stretch reads RIHSE. 3 residues coordinate Zn(2+): Cys-55, Cys-66, and Cys-68. Residues Gln-71, 93–95, and Thr-115 each bind GTP; that span reads EGR. Asp-127 functions as the Proton acceptor in the catalytic mechanism. Catalysis depends on Arg-129, which acts as the Nucleophile. The GTP site is built by Thr-150 and Lys-155.

This sequence belongs to the GTP cyclohydrolase II family. In terms of assembly, homodimer. The cofactor is Zn(2+).

It carries out the reaction GTP + 4 H2O = 2,5-diamino-6-hydroxy-4-(5-phosphoribosylamino)-pyrimidine + formate + 2 phosphate + 3 H(+). It participates in cofactor biosynthesis; riboflavin biosynthesis; 5-amino-6-(D-ribitylamino)uracil from GTP: step 1/4. Its function is as follows. Catalyzes the conversion of GTP to 2,5-diamino-6-ribosylamino-4(3H)-pyrimidinone 5'-phosphate (DARP), formate and pyrophosphate. This is GTP cyclohydrolase-2 from Buchnera aphidicola subsp. Baizongia pistaciae (strain Bp).